Consider the following 298-residue polypeptide: MATKEEHVRKPDWLKIKLNTNENYIGLKKLMRENRLHTVCEEAKCPNIHECWAVRRTATFMILGSVCTRACRFCAVKTGLPTELDWQEPERVAESVRIMNLKHVVVTAVARDDLKDGGAAVFAETVRAIRRKNPFTTIEVLPSDMGGVYENLKILMDARPDILNHNIETVRRLTPRVRARATYERSLEFLRRAKELQPDIPTKSSIMVGLGETKEEIIEAMDDLRANHVDILTIGQYLQPTKKHLKVVKYYHPDEFQELKEIALSKGFSHCEAGPLVRSSYHADEQVSEAAKARQLKA.

[4Fe-4S] cluster is bound by residues cysteine 40, cysteine 45, cysteine 51, cysteine 67, cysteine 71, cysteine 74, and serine 280. Residues 53-269 (AVRRTATFMI…KEIALSKGFS (217 aa)) enclose the Radical SAM core domain.

It belongs to the radical SAM superfamily. Lipoyl synthase family. It depends on [4Fe-4S] cluster as a cofactor.

It localises to the cytoplasm. The enzyme catalyses [[Fe-S] cluster scaffold protein carrying a second [4Fe-4S](2+) cluster] + N(6)-octanoyl-L-lysyl-[protein] + 2 oxidized [2Fe-2S]-[ferredoxin] + 2 S-adenosyl-L-methionine + 4 H(+) = [[Fe-S] cluster scaffold protein] + N(6)-[(R)-dihydrolipoyl]-L-lysyl-[protein] + 4 Fe(3+) + 2 hydrogen sulfide + 2 5'-deoxyadenosine + 2 L-methionine + 2 reduced [2Fe-2S]-[ferredoxin]. The protein operates within protein modification; protein lipoylation via endogenous pathway; protein N(6)-(lipoyl)lysine from octanoyl-[acyl-carrier-protein]. In terms of biological role, catalyzes the radical-mediated insertion of two sulfur atoms into the C-6 and C-8 positions of the octanoyl moiety bound to the lipoyl domains of lipoate-dependent enzymes, thereby converting the octanoylated domains into lipoylated derivatives. In Geobacillus kaustophilus (strain HTA426), this protein is Lipoyl synthase.